Reading from the N-terminus, the 310-residue chain is N-acetyl-gamma-glutamyl-phosphate reductase (310 aa).

Cys117 is a catalytic residue.

Belongs to the NAGSA dehydrogenase family. Type 2 subfamily.

It localises to the cytoplasm. It carries out the reaction N-acetyl-L-glutamate 5-semialdehyde + phosphate + NADP(+) = N-acetyl-L-glutamyl 5-phosphate + NADPH + H(+). It functions in the pathway amino-acid biosynthesis; L-arginine biosynthesis; N(2)-acetyl-L-ornithine from L-glutamate: step 3/4. In terms of biological role, catalyzes the NADPH-dependent reduction of N-acetyl-5-glutamyl phosphate to yield N-acetyl-L-glutamate 5-semialdehyde. This chain is N-acetyl-gamma-glutamyl-phosphate reductase, found in Brucella ovis (strain ATCC 25840 / 63/290 / NCTC 10512).